The sequence spans 232 residues: MDSSDSSCQEWCSHGQYWLELGPTDLMERKGSLTLRSHHKKYSKPVLVYSWHRDRETYPKDYDIEGPEEVKKLCNSTYRRLGTSEPPVWISETREKMAQVCLNTKLAKIKSKALLNEETMNSGIIERDTGLPATGFGALFTRHSPDWSKMCTLTTYAEEYAPPYEYQPLGDPCQDDDYSIVHRKCRSQFTDLDGSKRVGINTWHDESGIYANSYVKRKLYSLTGGPIAPFLK.

Over 1–96 (MDSSDSSCQE…PVWISETREK (96 aa)) the chain is Extracellular. N-linked (GlcNAc...) asparagine glycosylation is present at N75. Residues 97–115 (MAQVCLNTKLAKIKSKALL) traverse the membrane as a helical segment. The Cytoplasmic segment spans residues 116–232 (NEETMNSGII…TGGPIAPFLK (117 aa)). Positions 153–163 (LTTYAEEYAPP) are mn.

Microtubule inner protein component of sperm flagellar doublet microtubules. Interacts with MYH9. Interacts with MYH10. As to expression, expressed in trachea multiciliated cells.

It localises to the cytoplasm. The protein resides in the cytoskeleton. The protein localises to the cilium axoneme. It is found in the flagellum axoneme. Its subcellular location is the cell membrane. Microtubule inner protein (MIP) part of the dynein-decorated doublet microtubules (DMTs) in cilia axoneme, which is required for motile cilia beating. This Bos taurus (Bovine) protein is Cilia- and flagella-associated protein 95.